The primary structure comprises 312 residues: DDRGK domain-containing protein 1 (312 aa).

Topologically, residues 1 to 2 (ME) are lumenal. The helical transmembrane segment at 3 to 23 (LIILVGIATALLVVIITLYLL) threads the bilayer. The Cytoplasmic portion of the chain corresponds to 24 to 312 (QKKNAAPETK…ISAGGEEASS (289 aa)). Positions 59–79 (NQRNRLRQNAPAAPAGQVAPA) are enriched in low complexity. The interval 59–162 (NQRNRLRQNA…RKHQEDLEAE (104 aa)) is disordered. The span at 110–162 (LDEKMGAKKRAKMEAKEQKRLQREQELHDREQRKVKEAKEEAERKHQEDLEAE) shows a compositional bias: basic and acidic residues.

This sequence belongs to the DDRGK1 family. As to quaternary structure, interacts with Atg9; the interaction is transient.

Its subcellular location is the endoplasmic reticulum membrane. Functionally, substrate adapter for ufmylation, the covalent attachment of the ubiquitin-like modifier UFM1 to substrate proteins. Required for ufmylation of Atg9; protects the nervous system during aging, possibly by stabilizing Atg9 and supporting its function. This is DDRGK domain-containing protein 1 from Drosophila yakuba (Fruit fly).